The primary structure comprises 222 residues: MASILARRSLNTLRARHLVLSGQALQGSHLSRLQSRGISYGSNKDDEEAEQLSKEISKDWNTVFERSINTLFLTEMVRGLSLTLKYFFDPKVTINYPFEKGPLSPRFRGEHALRRYPTGEERCIACKLCEAVCPAQAITIEAEEREDGSRRTTRYDIDMTKCIYCGFCQEACPVDAIVEGPNFEFATETHEELLYDKEKLLENGDRWETEIAENLRSESLYR.

2 4Fe-4S ferredoxin-type domains span residues arginine 114–glutamate 143 and threonine 153–asparagine 182. The [4Fe-4S] cluster site is built by cysteine 123, cysteine 126, cysteine 129, cysteine 133, cysteine 162, cysteine 165, cysteine 168, and cysteine 172.

It belongs to the complex I 23 kDa subunit family. In terms of assembly, complex I is composed of at least 49 different subunits. This is a component of the iron-sulfur (IP) fragment of the enzyme. The cofactor is [4Fe-4S] cluster.

The protein localises to the mitochondrion. The enzyme catalyses a ubiquinone + NADH + 5 H(+)(in) = a ubiquinol + NAD(+) + 4 H(+)(out). Core subunit of the mitochondrial membrane respiratory chain NADH dehydrogenase (Complex I) that is believed to belong to the minimal assembly required for catalysis. Complex I functions in the transfer of electrons from NADH to the respiratory chain. The immediate electron acceptor for the enzyme is believed to be ubiquinone. May donate electrons to ubiquinone. In Arabidopsis thaliana (Mouse-ear cress), this protein is NADH dehydrogenase [ubiquinone] iron-sulfur protein 8-A, mitochondrial.